Here is a 424-residue protein sequence, read N- to C-terminus: MDISDHHMTDVGIIRPDVHIEVHVKSQSTAKRSDVRTHVLSLLDRHSTVLRSFKWMDFDNEFLTKNVESVTIADVTGPKLVDLKVHNLCIHIFTLNDDSPSTLNLEEEEELSAANLWLLPAVEFHGVWESLIYEEGIKTQLLDYVSTTIFFSDKNVDSNLIAWNRVVLLHGPPGTGKTSLCKGLAQKLSIRLSDRYAHSQFVEINSHSLFSKWFSESGKLVTKMFQKIQELIDDKDALVFVLIDEVESLTAARSAAQAGTEPSDAIRVVNSVLTQLDQIKRHPNVVILTTSNVTEKIDLAFVDRADIKQYIGPPSAKAIFNIYLSSLEELMKRQIIYPRQQLVSLEELETMNFMESDVTRLSLCLMNISQRSVGLSGRALRKIPFLAHALYGKTSTMTLKGFLTAMEHAVNKQRQEQASLVNCV.

171–178 (GPPGTGKT) contacts ATP.

The protein belongs to the AAA ATPase family. PCH2 subfamily.

Functionally, plays a key role in chromosome recombination and chromosome structure development during meiosis. Required at early steps in meiotic recombination that leads to non-crossovers pathways. Also needed for efficient completion of homologous synapsis by influencing crossover distribution along the chromosomes affecting both crossovers and non-crossovers pathways. This Danio rerio (Zebrafish) protein is Pachytene checkpoint protein 2 homolog (trip13).